A 107-amino-acid polypeptide reads, in one-letter code: Flagellar transcriptional regulator FlhD (107 aa).

The protein belongs to the FlhD family. In terms of assembly, homodimer; disulfide-linked. Forms a heterohexamer composed of two FlhC and four FlhD subunits. Each FlhC binds a FlhD dimer, forming a heterotrimer, and a hexamer assembles by dimerization of two heterotrimers.

The protein localises to the cytoplasm. Functionally, functions in complex with FlhC as a master transcriptional regulator that regulates transcription of several flagellar and non-flagellar operons by binding to their promoter region. Activates expression of class 2 flagellar genes, including fliA, which is a flagellum-specific sigma factor that turns on the class 3 genes. Also regulates genes whose products function in a variety of physiological pathways. The polypeptide is Flagellar transcriptional regulator FlhD (Bordetella pertussis (strain Tohama I / ATCC BAA-589 / NCTC 13251)).